The sequence spans 339 residues: Phenylalanine--tRNA ligase alpha subunit (339 aa).

Residue Glu-254 coordinates Mg(2+).

This sequence belongs to the class-II aminoacyl-tRNA synthetase family. Phe-tRNA synthetase alpha subunit type 1 subfamily. As to quaternary structure, tetramer of two alpha and two beta subunits. Mg(2+) serves as cofactor.

It localises to the cytoplasm. It catalyses the reaction tRNA(Phe) + L-phenylalanine + ATP = L-phenylalanyl-tRNA(Phe) + AMP + diphosphate + H(+). The chain is Phenylalanine--tRNA ligase alpha subunit from Clostridium beijerinckii (strain ATCC 51743 / NCIMB 8052) (Clostridium acetobutylicum).